The primary structure comprises 137 residues: NADH-quinone oxidoreductase subunit A (137 aa).

3 helical membrane passes run 12 to 32 (WGFAIFLLGVVGLCAFMLGLS), 66 to 86 (FYLVAMLFVIFDIEALFLFAW), and 95 to 115 (WTGFVEALVFIAILLAGLVYL).

It belongs to the complex I subunit 3 family. In terms of assembly, NDH-1 is composed of 13 different subunits. Subunits NuoA, H, J, K, L, M, N constitute the membrane sector of the complex.

The protein localises to the cell inner membrane. It catalyses the reaction a quinone + NADH + 5 H(+)(in) = a quinol + NAD(+) + 4 H(+)(out). Its function is as follows. NDH-1 shuttles electrons from NADH, via FMN and iron-sulfur (Fe-S) centers, to quinones in the respiratory chain. The immediate electron acceptor for the enzyme in this species is believed to be ubiquinone. Couples the redox reaction to proton translocation (for every two electrons transferred, four hydrogen ions are translocated across the cytoplasmic membrane), and thus conserves the redox energy in a proton gradient. The protein is NADH-quinone oxidoreductase subunit A of Pseudomonas putida (strain ATCC 700007 / DSM 6899 / JCM 31910 / BCRC 17059 / LMG 24140 / F1).